A 240-amino-acid chain; its full sequence is UDP-2,3-diacylglucosamine hydrolase (240 aa).

Mn(2+) is bound by residues D8, H10, D41, N79, and H114. Residue 79 to 80 participates in substrate binding; that stretch reads NR. Substrate-binding residues include D122, S160, N164, K167, and H195. Positions 195 and 197 each coordinate Mn(2+).

The protein belongs to the LpxH family. Requires Mn(2+) as cofactor.

It localises to the cell inner membrane. The catalysed reaction is UDP-2-N,3-O-bis[(3R)-3-hydroxytetradecanoyl]-alpha-D-glucosamine + H2O = 2-N,3-O-bis[(3R)-3-hydroxytetradecanoyl]-alpha-D-glucosaminyl 1-phosphate + UMP + 2 H(+). Its pathway is glycolipid biosynthesis; lipid IV(A) biosynthesis; lipid IV(A) from (3R)-3-hydroxytetradecanoyl-[acyl-carrier-protein] and UDP-N-acetyl-alpha-D-glucosamine: step 4/6. Functionally, hydrolyzes the pyrophosphate bond of UDP-2,3-diacylglucosamine to yield 2,3-diacylglucosamine 1-phosphate (lipid X) and UMP by catalyzing the attack of water at the alpha-P atom. Involved in the biosynthesis of lipid A, a phosphorylated glycolipid that anchors the lipopolysaccharide to the outer membrane of the cell. The chain is UDP-2,3-diacylglucosamine hydrolase from Serratia proteamaculans (strain 568).